A 101-amino-acid polypeptide reads, in one-letter code: Small ribosomal subunit protein uS14 (101 aa).

The protein belongs to the universal ribosomal protein uS14 family. As to quaternary structure, part of the 30S ribosomal subunit. Contacts proteins S3 and S10.

Functionally, binds 16S rRNA, required for the assembly of 30S particles and may also be responsible for determining the conformation of the 16S rRNA at the A site. This Pseudoalteromonas translucida (strain TAC 125) protein is Small ribosomal subunit protein uS14.